A 943-amino-acid chain; its full sequence is Isoleucine--tRNA ligase (943 aa).

The 'HIGH' region motif lies at P59–H69. E577 lines the L-isoleucyl-5'-AMP pocket. The 'KMSKS' region motif lies at K618–S622. K621 contacts ATP. Zn(2+) is bound by residues C906, C909, C926, and C929.

This sequence belongs to the class-I aminoacyl-tRNA synthetase family. IleS type 1 subfamily. In terms of assembly, monomer. Requires Zn(2+) as cofactor.

The protein resides in the cytoplasm. The catalysed reaction is tRNA(Ile) + L-isoleucine + ATP = L-isoleucyl-tRNA(Ile) + AMP + diphosphate. Its function is as follows. Catalyzes the attachment of isoleucine to tRNA(Ile). As IleRS can inadvertently accommodate and process structurally similar amino acids such as valine, to avoid such errors it has two additional distinct tRNA(Ile)-dependent editing activities. One activity is designated as 'pretransfer' editing and involves the hydrolysis of activated Val-AMP. The other activity is designated 'posttransfer' editing and involves deacylation of mischarged Val-tRNA(Ile). In Xanthomonas oryzae pv. oryzae (strain MAFF 311018), this protein is Isoleucine--tRNA ligase.